A 687-amino-acid chain; its full sequence is Dentin sialophosphoprotein (687 aa).

An N-terminal signal peptide occupies residues 1 to 17 (MKTKIIIYICIWATAWA). The interval 54–113 (NNATNDDSPKGSELGRQVHSNGGYERDRNGSESIAVGGKSSPTQPILANAQGNSAKERED) is disordered. Residue Asn55 is glycosylated (N-linked (GlcNAc...) asparagine). Thr57 bears the Phosphothreonine; by CK2 mark. N-linked (GlcNAc...) asparagine glycosylation is present at Asn82. Residues 93–107 (SSPTQPILANAQGNS) are compositionally biased toward polar residues. N-linked (GlcNAc...) asparagine glycosylation is present at Asn128. The span at 146–160 (EAKESKVHGQPHQDT) shows a compositional bias: basic and acidic residues. Residues 146 to 687 (EAKESKVHGQ…SDSNHSTSDD (542 aa)) are disordered. Residues 161–194 (KTGLASDTSQNGDATLVQENEPQVAGSKNSTNHE) are compositionally biased toward polar residues. An N-linked (GlcNAc...) asparagine glycan is attached at Asn189. A Phosphoserine; by CK2 modification is found at Ser226. At Ser253 the chain carries Phosphoserine; by CK1. Positions 262–275 (GDGRESHDGTEGHE) are enriched in basic and acidic residues. A compositionally biased stretch (polar residues) spans 276 to 292 (GQSSGGNNDNRGQGSVS). Ser278 carries the phosphoserine; by CK1 modification. Residue Ser292 is modified to Phosphoserine; by CK2. Ser298 is subject to Phosphoserine; by CK1. N-linked (GlcNAc...) asparagine glycosylation is present at Asn312. Ser315 is subject to Phosphoserine; by CK2. Phosphothreonine; by CK2 is present on residues Thr319 and Thr329. A phosphoserine; by CK2 mark is found at Ser337 and Ser345. A compositionally biased stretch (polar residues) spans 352–375 (SGQSQNQGLETEGSSTGNKSSITK). Phosphoserine; by CK1 is present on Ser366. Residue Asn369 is glycosylated (N-linked (GlcNAc...) asparagine). Residues 386-417 (SNGHHGMELDKRNSPKQGESDKPQGAAEKSDT) show a composition bias toward basic and acidic residues. Residues 418-432 (HNNMGHSRIGSSSNS) are compositionally biased toward polar residues. Over residues 447–460 (GDDPNSSDESNGSD) the composition is skewed to low complexity. Residues 500 to 521 (DDSSDDTSDTDDSDSNGDDDSE) are compositionally biased toward acidic residues. Over residues 522–545 (SKDKDESDNSNHDNDSDSESKSDS) the composition is skewed to basic and acidic residues. The segment covering 555–598 (SSDSSDSSDSSETSDSSDSSDTSDSSDSSDSSDSSNSSDTSDSS) has biased composition (low complexity). The span at 599–617 (DSSDGDSSDGDSSDSDSSD) shows a compositional bias: acidic residues. The segment covering 618–639 (SDSSNSSDSDSSDSSDSSSSDS) has biased composition (low complexity). The segment covering 667–677 (SDSDSDSDSEG) has biased composition (acidic residues). Residues 678 to 687 (SDSNHSTSDD) show a composition bias toward low complexity.

Interacts with FBLN7. In terms of processing, DSP is glycosylated. As to expression, specifically expressed in teeth, mainly in odontoblasts and transiently in pre-ameloblasts.

The protein localises to the secreted. It localises to the extracellular space. It is found in the extracellular matrix. DSP may be an important factor in dentinogenesis. DPP may bind high amount of calcium and facilitate initial mineralization of dentin matrix collagen as well as regulate the size and shape of the crystals. This Rattus norvegicus (Rat) protein is Dentin sialophosphoprotein (Dspp).